The primary structure comprises 72 residues: Conotoxin LvVIA (72 aa).

Residues 1–17 (VLIIAVLFLTASELVTA) form the signal peptide. The propeptide occupies 18–41 (DYTRDKWQYRAASLRDAMRNFRDT). 3 cysteine pairs are disulfide-bonded: Cys-44-Cys-58, Cys-51-Cys-63, and Cys-57-Cys-70.

It belongs to the conotoxin O1 superfamily. As to expression, expressed by the venom duct.

It localises to the secreted. The chain is Conotoxin LvVIA from Conus lividus (Livid cone).